Here is a 141-residue protein sequence, read N- to C-terminus: VLSEADKSNVKGIWSKACCHLEDYGAETLERLFFVYPQTKIYFPHFDLTHNSAQIRGHGKKVFLALHDAVNHIDDLSGALSRLSDLHAHNLRVDPVNFKLLSQCVLVVFGVHHPGALTPEVHASLDKFLCAVSTVLTSKYR.

In terms of domain architecture, Globin spans V1–R141. H58 contacts O2. Heme b is bound at residue H87.

It belongs to the globin family. As to quaternary structure, heterotetramer of two alpha chains and two beta chains. When oxygenated in vitro, exists virtually only in polymeric form. When deoxygenated, forms tetramers, octamers and larger polymers. In terms of tissue distribution, red blood cells.

Its function is as follows. Involved in oxygen transport from the lung to the various peripheral tissues. In Paleosuchus palpebrosus (Cuvier's smooth-fronted caiman), this protein is Hemoglobin subunit alpha.